The sequence spans 111 residues: Cell division protein FtsB (111 aa).

Residues 1 to 3 (MGK) are Cytoplasmic-facing. Residues 4–21 (LTLLLLILLGWLQYSLWL) form a helical membrane-spanning segment. Topologically, residues 22–111 (GKNGIHDYVR…TNTSSNNTQR (90 aa)) are periplasmic. Residues 33-63 (KDDVVVQQGNNAKLKDRNEQLFAEIDDLNGG) are a coiled coil. A disordered region spans residues 88 to 111 (VPESNHRNANTPSSTNTSSNNTQR). Residues 97 to 111 (NTPSSTNTSSNNTQR) show a composition bias toward low complexity.

It belongs to the FtsB family. Part of a complex composed of FtsB, FtsL and FtsQ.

The protein localises to the cell inner membrane. Functionally, essential cell division protein. May link together the upstream cell division proteins, which are predominantly cytoplasmic, with the downstream cell division proteins, which are predominantly periplasmic. The polypeptide is Cell division protein FtsB (Pectobacterium atrosepticum (strain SCRI 1043 / ATCC BAA-672) (Erwinia carotovora subsp. atroseptica)).